Consider the following 190-residue polypeptide: Prostaglandin-H2 D-isomerase (190 aa).

The N-terminal stretch at 1–22 (MATHHTLWMGLALLGVLGDLQA) is a signal peptide. The N-linked (GlcNAc...) asparagine glycan is linked to N51. The active-site Nucleophile is C65. N-linked (GlcNAc...) asparagine glycosylation occurs at N78. C89 and C186 form a disulfide bridge.

It belongs to the calycin superfamily. Lipocalin family. As to quaternary structure, monomer.

It is found in the rough endoplasmic reticulum. Its subcellular location is the nucleus membrane. The protein localises to the golgi apparatus. The protein resides in the cytoplasm. It localises to the perinuclear region. It is found in the secreted. It carries out the reaction prostaglandin H2 = prostaglandin D2. Functionally, catalyzes the conversion of PGH2 to PGD2, a prostaglandin involved in smooth muscle contraction/relaxation and a potent inhibitor of platelet aggregation. Involved in a variety of CNS functions, such as sedation, NREM sleep and PGE2-induced allodynia, and may have an anti-apoptotic role in oligodendrocytes. Binds small non-substrate lipophilic molecules, including biliverdin, bilirubin, retinal, retinoic acid and thyroid hormone, and may act as a scavenger for harmful hydrophobic molecules and as a secretory retinoid and thyroid hormone transporter. Possibly involved in development and maintenance of the blood-brain, blood-retina, blood-aqueous humor and blood-testis barrier. It is likely to play important roles in both maturation and maintenance of the central nervous system and male reproductive system. Involved in PLA2G3-dependent maturation of mast cells. PLA2G3 is secreted by immature mast cells and acts on nearby fibroblasts upstream to PTDGS to synthesize PGD2, which in turn promotes mast cell maturation and degranulation via PTGDR. In Gorilla gorilla gorilla (Western lowland gorilla), this protein is Prostaglandin-H2 D-isomerase (PTGDS).